Consider the following 231-residue polypeptide: Protein usf (231 aa).

In Aquifex pyrophilus, this protein is Protein usf (usf).